The following is a 296-amino-acid chain: Homoserine kinase (296 aa).

84-94 (PLARGLGSSSS) serves as a coordination point for ATP.

It belongs to the GHMP kinase family. Homoserine kinase subfamily.

It is found in the cytoplasm. It catalyses the reaction L-homoserine + ATP = O-phospho-L-homoserine + ADP + H(+). Its pathway is amino-acid biosynthesis; L-threonine biosynthesis; L-threonine from L-aspartate: step 4/5. In terms of biological role, catalyzes the ATP-dependent phosphorylation of L-homoserine to L-homoserine phosphate. The sequence is that of Homoserine kinase from Lactococcus lactis subsp. lactis (strain IL1403) (Streptococcus lactis).